The sequence spans 87 residues: MHGPHPTVKDIELSLAPEDVPVQCNVQLDEEDYTNVEEPAQQAYRVVTLCPKCSSPLRLVVECSHADIRALEQLLLGTLTVVCPRCV.

An E7 terminal domain region spans residues 1–38; that stretch reads MHGPHPTVKDIELSLAPEDVPVQCNVQLDEEDYTNVEE. Residues 50–86 fold into a zinc finger; that stretch reads CPKCSSPLRLVVECSHADIRALEQLLLGTLTVVCPRC. A Nuclear export signal motif is present at residues 68–76; sequence IRALEQLLL.

Belongs to the papillomaviridae E7 protein family. In terms of assembly, homodimer. Homooligomer. Interacts with host RB1; this interaction induces dissociation of RB1-E2F1 complex thereby disrupting RB1 activity. Interacts with host EP300; this interaction represses EP300 transcriptional activity. Interacts with protein E2; this interaction inhibits E7 oncogenic activity. Interacts with host TMEM173/STING; this interaction impairs the ability of TMEM173/STING to sense cytosolic DNA and promote the production of type I interferon (IFN-alpha and IFN-beta). Highly phosphorylated.

It is found in the host cytoplasm. The protein localises to the host nucleus. Functionally, plays a role in viral genome replication by driving entry of quiescent cells into the cell cycle. Stimulation of progression from G1 to S phase allows the virus to efficiently use the cellular DNA replicating machinery to achieve viral genome replication. E7 protein has both transforming and trans-activating activities. Induces the disassembly of the E2F1 transcription factor from RB1, with subsequent transcriptional activation of E2F1-regulated S-phase genes. Interferes with host histone deacetylation mediated by HDAC1 and HDAC2, leading to transcription activation. Also plays a role in the inhibition of both antiviral and antiproliferative functions of host interferon alpha. Interaction with host TMEM173/STING impairs the ability of TMEM173/STING to sense cytosolic DNA and promote the production of type I interferon (IFN-alpha and IFN-beta). The protein is Protein E7 of Human papillomavirus 28.